A 166-amino-acid chain; its full sequence is Sec-independent protein translocase protein TatB (166 aa).

The chain crosses the membrane as a helical span at residues 2–22; that stretch reads FDGIGFMELLLIGVLGLVVLG. Residues 69–166 form a disordered region; it reads SKGLSNLSPE…DTRSNPKANG (98 aa). 2 stretches are compositionally biased toward polar residues: residues 88–97 and 112–132; these read QAAQSVNRPY and QIHS…SQAN. Low complexity predominate over residues 133–153; that stretch reads PTATVEASPTSASPATPSEPS. Polar residues predominate over residues 155 to 166; the sequence is GADTRSNPKANG.

The protein belongs to the TatB family. The Tat system comprises two distinct complexes: a TatABC complex, containing multiple copies of TatA, TatB and TatC subunits, and a separate TatA complex, containing only TatA subunits. Substrates initially bind to the TatABC complex, which probably triggers association of the separate TatA complex to form the active translocon.

The protein localises to the cell inner membrane. In terms of biological role, part of the twin-arginine translocation (Tat) system that transports large folded proteins containing a characteristic twin-arginine motif in their signal peptide across membranes. Together with TatC, TatB is part of a receptor directly interacting with Tat signal peptides. TatB may form an oligomeric binding site that transiently accommodates folded Tat precursor proteins before their translocation. This chain is Sec-independent protein translocase protein TatB, found in Shewanella baltica (strain OS223).